Consider the following 196-residue polypeptide: MNLIPTVIEQTSRGERAYDIYSRLLKDRIIILGSPIDDHVANSIVSQLLFLAAEDPEKDISLYINSPGGSITAGMAIYDTMQFIKPDVSTICIGMAASMGAFLLAAGAKGKRFALPNSEIMIHQPLGGVQGQATEIEIAAKRILFLRDKLNRILSENTGQPIEVIERDTDRDNFMTAEKAKEYGLIDRVLTRVDEK.

Residue Ser98 is the Nucleophile of the active site. The active site involves His123.

This sequence belongs to the peptidase S14 family. As to quaternary structure, fourteen ClpP subunits assemble into 2 heptameric rings which stack back to back to give a disk-like structure with a central cavity, resembling the structure of eukaryotic proteasomes.

Its subcellular location is the cytoplasm. The catalysed reaction is Hydrolysis of proteins to small peptides in the presence of ATP and magnesium. alpha-casein is the usual test substrate. In the absence of ATP, only oligopeptides shorter than five residues are hydrolyzed (such as succinyl-Leu-Tyr-|-NHMec, and Leu-Tyr-Leu-|-Tyr-Trp, in which cleavage of the -Tyr-|-Leu- and -Tyr-|-Trp bonds also occurs).. Cleaves peptides in various proteins in a process that requires ATP hydrolysis. Has a chymotrypsin-like activity. Plays a major role in the degradation of misfolded proteins. The chain is ATP-dependent Clp protease proteolytic subunit from Anoxybacillus flavithermus (strain DSM 21510 / WK1).